The chain runs to 1461 residues: Phospholipid-transporting ATPase VB (1461 aa).

Residues M1–L82 are Cytoplasmic-facing. The chain crosses the membrane as a helical span at residues P83–L104. Residues N105–M110 are Exoplasmic loop-facing. Residues E111–K132 traverse the membrane as a helical segment. Over D133 to D316 the chain is Cytoplasmic. The chain crosses the membrane as a helical span at residues I317–W338. Residues N339 to F368 lie on the Exoplasmic loop side of the membrane. Residues L369 to V390 traverse the membrane as a helical segment. Residues K391 to R1111 lie on the Cytoplasmic side of the membrane. D433 functions as the 4-aspartylphosphate intermediate in the catalytic mechanism. D433, K434, and T435 together coordinate ATP. D433 is a binding site for Mg(2+). T435 serves as a coordination point for Mg(2+). Composition is skewed to polar residues over residues M496 to A511 and S530 to S539. 2 disordered regions span residues M496 to E541 and T640 to Q687. ATP contacts are provided by E724, F766, K790, R835, T915, G916, D917, R1029, and K1035. Position 1055 (D1055) interacts with Mg(2+). ATP contacts are provided by N1058 and D1059. D1059 lines the Mg(2+) pocket. Residues M1112 to F1132 traverse the membrane as a helical segment. The Exoplasmic loop portion of the chain corresponds to F1133 to Y1144. A helical membrane pass occupies residues W1145–V1164. Residues L1165 to T1194 are Cytoplasmic-facing. The chain crosses the membrane as a helical span at residues F1195–A1216. The Exoplasmic loop segment spans residues Y1217–D1223. Residues V1224–E1246 traverse the membrane as a helical segment. At M1247 to I1252 the chain is on the cytoplasmic side. The helical transmembrane segment at F1253–N1273 threads the bilayer. Topologically, residues A1274–G1291 are exoplasmic loop. A helical membrane pass occupies residues Q1292–F1316. The Cytoplasmic segment spans residues L1317–I1461. Positions I1346 to V1397 are disordered. Residues P1368–P1387 show a composition bias toward polar residues.

It belongs to the cation transport ATPase (P-type) (TC 3.A.3) family. Type IV subfamily. In terms of assembly, component of a P4-ATPase flippase complex which consists of a catalytic alpha subunit ATP10B and an accessory beta subunit TMEM30A. Mg(2+) is required as a cofactor. Autophosphorylated at the conserved aspartate of the P-type ATPase signature sequence. Expressed in predominantly in brain structures including medulla oblongata, substantia nigra and basal ganglia. Expressed in the gastrointestinal system with highest levels in the small intestine and colon. Also expressed at low levels in testis and thymus.

The protein resides in the late endosome membrane. The protein localises to the lysosome membrane. Its subcellular location is the endoplasmic reticulum membrane. The catalysed reaction is ATP + H2O + phospholipidSide 1 = ADP + phosphate + phospholipidSide 2.. It carries out the reaction a beta-D-glucosyl-(1&lt;-&gt;1')-N-acylsphing-4-enine(out) + ATP + H2O = a beta-D-glucosyl-(1&lt;-&gt;1')-N-acylsphing-4-enine(in) + ADP + phosphate + H(+). Catalytic component of a P4-ATPase flippase complex, which catalyzes the hydrolysis of ATP coupled to the transport of glucosylceramide (GlcCer) from the outer to the inner leaflet of lysosome membranes. Plays an important role in the maintenance of lysosome membrane integrity and function in cortical neurons. This is Phospholipid-transporting ATPase VB from Homo sapiens (Human).